A 797-amino-acid chain; its full sequence is Protocadherin beta-11 (797 aa).

Residues 1–26 (MENQGTRTQQIRQVLLLFVLLGMSQA) form the signal peptide. Topologically, residues 27–690 (GSETWSFSVA…AQADSLTVYL (664 aa)) are extracellular. Cadherin domains lie at 35–133 (VAEE…SPIF), 138–242 (MLLE…SPEF), 247–347 (YEVK…APEI), 352–451 (ITSP…APTF), and 456–561 (YTLF…SPFV). Residues Asn-418, Asn-436, Asn-487, and Asn-567 are each glycosylated (N-linked (GlcNAc...) asparagine). The region spanning 568–671 (GSAPCTELVP…LVDGFSQPYL (104 aa)) is the Cadherin 6 domain. Residues 691–711 (VVALASVSSLFLFSVLLFVAV) traverse the membrane as a helical segment. The Cytoplasmic segment spans residues 712 to 797 (RLCRRSRAAS…TFRNSFGFNF (86 aa)).

The protein localises to the cell membrane. Its function is as follows. Potential calcium-dependent cell-adhesion protein. May be involved in the establishment and maintenance of specific neuronal connections in the brain. This Homo sapiens (Human) protein is Protocadherin beta-11 (PCDHB11).